The following is a 2528-amino-acid chain: MTVRDSKTGGITPIAVVGMSFRGPGDATNVEKLLNMISEGRESRAEVQAKKWDPEGFYHPDSSRHGTHNVEYGHWFQQDVYNFDAPFFNVSPAEAAALDPQQRMLLECSYEAFENSGTPMSKIVGTDTSVFVSSFATDYTDMLWRDPESVPMYQCTNSGFSRSNLANRISYSFDLKGPSVLVDTACSGGLTALHLACQSLLVGDVRQALAAGSSLILGPEMMVTMSMMKFLSPDGRCYAFDERANGYARGEGVAVLLLKRLEDALADNDTIRAVIRGTGCNQDGKTPGITMPNSVSQEALIRSVYKKAALDPLDTTYVECHGTGTQAGDTTEASALSKVFSPGRRLPLLIGSVKTNIGHLEGASGLAGVVKSILMLEQGVILPNRNFERPNTKIPLEKWNLRVPTTLECWNNVKTRRVSINSFGYGGANVHAILESATDFLRDNSMGTDSTRFASRRSVVVGNVGQTKPAVSLVQDMSSNDRSHEDPTPLLFALSAFDSSAGDAWARSLSIYLSQRQGSDEKTILSSLAYTLSDRRTWHPWKAALSATTIQELITKLEKVRFVNMAPRHNIGFVFTGQGAQWCGMGRELISIFPRFRQSLIACDIALQSFGADFHVIDELEADVESSRINKALYSQPLCTALQIALVDLLVSWGIYAQSVTGHSSGEIAAAYAAGALSLSDAMLVAYARGCATANLAKKGAKGAMAAVSMETQELSHILSALENGKVGIACFNSPTSCTVSGDKSALDELQDVLRQKGVYNRRLIVDVAYHSHHMELIADSYRSAISSIQPLPGSDVKFFSSVTGELLDKNKLGVDYWVSNLVGQVKFAQSLSSLVSSHHGTGTPQIQALIEIGPHAALGGPISQVIDSEPLANPTGYFSALVRKKNAVTTILSLAADLFLSGYPIQLSAVNQNCNSRHTPLVDLPSYSWNHSKAYTAESRISKTYRQRRYPRLDLIGVFDVHSSVLEPRWRQVIRLSELPWLQDHKIQSSILYPVAGYIAMAIEAATQRNQMREMGNDILGYQFRDVAISSALTIPDMPGQVEVFITLRSFSESVRSPSNLWDEFSISSVNDENRWTEHCRGLISVLKSSKLSNLVNGKMQDASTIACQHDLREVFATCCKTEWDVKDMYEHFWETGMQYGPTFANLCDVRCTSNKCIGKVKVPDTAAVMPMKHEAPFIIHPGTLDSIIQTYLPALVQAGHLKSATIPVAIESMFISRNVTRQAGDLLTSYASSTRKDYRYFSTSMSVFADGPSSENQLVITIDDMTLVALDRPNSSEESGEALPLAFNLHWKPDVDMLTEEQLVEMINASTKVKDHIAAKKMKQTAAQLGKEILARVPFEQAQVVGESSRHLWKLLHASLESLSTPDHRGALDEISSLKNVDSTLAQAADRLSNVLTGRVAPSDVASMYDLMEAVRIPELYDNNLPTATYLHLLGHKKPSLRVLTVGPQSGPTSLNLLMLLAELGGGEIPFAVLHHSDAELNIDQTVRSRFPSWADSVGFRDVFNESGASQQNPPIVNETYDIVVAFNVLGSSPGFSKTLSAAAPLLNARGKILLVDNSHKSPMAALVWGPLPSFLSTWVDEKSADSPDVDCAVQSMGYDIYARLCPNVTVIQRAAQVQKAEKTIGLDVLVVTDGEPAGVDLQQLQTLCEDQYAEVHVASLEHARPRPGQACIVLSELSRPVLAAPTAAEWEAVKRITDTCSGIVWVTRGAADNVCSNPQVSLIQGFARTVRAEAGDKPITTLDLDNDKVLSAQAAAAYIAAVFQRMMQGGEDIDVELQERRGILHVARLIEDGDAAKQLQGEATAMELRLDQAGPCRLFAGTPGLLDSLHFTVDDRVQESLETGQIEVQVHATGINFKDVMMAMGQIAVEDLGCECSGVVSAVGDGVVGLRVGDRVACMGPGSFCTQLRVDARLAHRIPHHMELETAAALPITYVTAYHSIHNIAHLRHGETILIHAAAGGLGQALVELSQLVGARVLVTVGSTEKKRLIMQRFRLSEEDILFSRDTSFVHDVMRLTNGRGVDVIMNSLAGESLRQSWTCIAPNGRFVELGQRDITVNSRLDMAPFARNVSFTAYNLAYMLRHDPQAAHEVLAEVLALYDQGKLRGPEPLEKCTFSQLGNAFRKIQTGRHMGKMVAVANPDDMVWYKPPPASRRTLFRPDASYLLVGGVGGLGSATALWMSTRGARHLLLLNRSGADTEAARTTLATLRANGCTATVLACDVADKAQLSSVLAEARSNWPPIRGVIQGAMVLRDSMLANMTLEDYMAVVRPKVQGTWNLQTHLPADLDFFILESSISGIIGNPGQAAYAAANTFLDAFARWRRARCQPATVIDIGAVHGIGYLERNVDVKLSMERQGFAFTDEQLLMRLLEFAISHSSREPHRAQIVTGLGPWHPDTSLPGLNAPLFSRYRMLSCQNSTGSTDVDTLRGILAQSSSFDSAVTIVLSALVDQVVSRTEIPIENVHTTKSLQDYGIDSLVAVELRNWLIKDMDSVVPMLELLGAESLSALAVKIAARSQLISTNNRG.

The Ketosynthase family 3 (KS3) domain occupies 11-436 (ITPIAVVGMS…GANVHAILES (426 aa)). Catalysis depends on for beta-ketoacyl synthase activity residues cysteine 186, histidine 321, and histidine 359. Positions 573–868 (FVFTGQGAQW…LGGPISQVID (296 aa)) are malonyl-CoA:ACP transacylase (MAT). The N-terminal hotdog fold stretch occupies residues 954 to 1092 (LDLIGVFDVH…GLISVLKSSK (139 aa)). The 325-residue stretch at 954–1278 (LDLIGVFDVH…LVALDRPNSS (325 aa)) folds into the PKS/mFAS DH domain. The interval 956-1277 (LIGVFDVHSS…TLVALDRPNS (322 aa)) is dehydratase (DH) domain. The Proton acceptor; for dehydratase activity role is filled by histidine 986. A C-terminal hotdog fold region spans residues 1122 to 1278 (KTEWDVKDMY…LVALDRPNSS (157 aa)). The Proton donor; for dehydratase activity role is filled by aspartate 1187. An enoyl reductase (ER) domain region spans residues 1827-2139 (GLLDSLHFTV…TGRHMGKMVA (313 aa)). A ketoreductase (KR) domain region spans residues 2164–2341 (ASYLLVGGVG…ATVIDIGAVH (178 aa)). Residues 2442–2519 (SAVTIVLSAL…ALAVKIAARS (78 aa)) form the Carrier domain. The residue at position 2479 (serine 2479) is an O-(pantetheine 4'-phosphoryl)serine.

It participates in mycotoxin biosynthesis. Reducing polyketide synthase (PKS); part of the Tox1A locus, one of the 2 loci that mediate the biosynthesis of T-toxin, a family of linear polyketides 37 to 45 carbons in length, of which the major component is 41 carbons, and which leads to high virulence to maize. One of the PKSs (PKS1 or PKS2) could synthesize a precursor, used subsequently by the other PKS as starter unit, to add additional carbons. Variability in the length of the final carbon backbone C35-47 could be achieved by varying the number of condensation cycles, or use of different starter or extender units or might be due to decarboxylation of the penultimate product, catalyzed by DEC1. Additional proteins are required for the biosynthesis of T-toxin, including oxidoreductases RED1, RED2, RED3, LAM1 and OXI1, as well as esterase TOX9. This Cochliobolus heterostrophus (strain C4 / ATCC 48331 / race T) (Southern corn leaf blight fungus) protein is Reducing polyketide synthase PKS1.